We begin with the raw amino-acid sequence, 477 residues long: MQVLHVCSEMFPLLKTGGLADVIGALPAAQIADGVDARVLLPAFPDIRRGVTDAQVVSRRDTFAGHITLLFGHYNRVGIYLIDAPHLYDRPGSPYHDTNLFAYTDNVLRFALLGWVGAEMASGLDPFWRPDVVHAHDWHAGLAPAYLAARGRPAKSVFTVHNLAYQGMFYAHHMNDIQLPWSFFNIHGLEFNGQISFLKAGLYYADHITAVSPTYTREITEPQFAYGMEGLLQQRHREGRLSGVLNGVDEKIWSPETDLLLASRYTRDTLEDKAENKRQLQIAMGLKVDDKVPLFAVVSRLTSQKGLDLVLEALPGLLEQGGQLALLGAGDPVLQEGFLAAAAEYPGQVGVQIGYHEAFSHRIMGGADVILVPSRFEPCGLTQLYGLKYGTLPLVRRTGGLADTVSDCSLENLADGVASGFVFEDSNAWSLLRAIRRAFVLWSRPSLWRFVQRQAMAMDFSWQVAAKSYRELYYRLK.

ADP-alpha-D-glucose is bound at residue Lys15.

It belongs to the glycosyltransferase 1 family. Bacterial/plant glycogen synthase subfamily.

The catalysed reaction is [(1-&gt;4)-alpha-D-glucosyl](n) + ADP-alpha-D-glucose = [(1-&gt;4)-alpha-D-glucosyl](n+1) + ADP + H(+). It functions in the pathway glycan biosynthesis; glycogen biosynthesis. In terms of biological role, synthesizes alpha-1,4-glucan chains using ADP-glucose. This chain is Glycogen synthase, found in Shigella boydii serotype 18 (strain CDC 3083-94 / BS512).